Consider the following 357-residue polypeptide: Glucose 1-dehydrogenase (357 aa).

Aspartate 38 lines the Zn(2+) pocket. Positions 40 and 49 each coordinate substrate. 2 residues coordinate Zn(2+): histidine 63 and glutamate 64. Substrate is bound by residues glutamate 114 and glutamate 150. Glutamate 150 serves as a coordination point for Zn(2+). Residues asparagine 181 to leucine 184, arginine 207 to arginine 208, serine 228, leucine 272 to valine 274, and serine 301 to asparagine 303 contribute to the NADP(+) site. Residue asparagine 303 coordinates substrate.

This sequence belongs to the zinc-containing alcohol dehydrogenase family. Glucose 1-dehydrogenase subfamily. Homodimer. Requires Zn(2+) as cofactor.

The catalysed reaction is D-glucose + NAD(+) = D-glucono-1,5-lactone + NADH + H(+). It catalyses the reaction D-glucose + NADP(+) = D-glucono-1,5-lactone + NADPH + H(+). Activated by molar concentrations of KCl or NaCl. Inhibited by EDTA in vitro. Catalyzes the NAD(P)(+)-dependent oxidation of D-glucose to D-gluconate. Displays broad substrate specificity since it is able to catalyze the oxidation of a number of alternative aldose sugars, such as D-xylose, D-galactose, and D-fucose, to the corresponding glyconate. Can utilize both NAD(+) and NADP(+) as electron acceptor, with a preference for NADP(+). Physiologically, seems to be involved in the degradation of glucose through a modified Entner-Doudoroff pathway. The sequence is that of Glucose 1-dehydrogenase from Haloferax mediterranei (strain ATCC 33500 / DSM 1411 / JCM 8866 / NBRC 14739 / NCIMB 2177 / R-4) (Halobacterium mediterranei).